The chain runs to 170 residues: TFIIB-type zinc finger protein (170 aa).

The TFIIB-type zinc finger occupies 1 to 30; the sequence is MECPVCGSNEIVWDNKNGEVVCSNCGIIID. Zn(2+) is bound by residues cysteine 3, cysteine 6, cysteine 22, and cysteine 25.

Belongs to the TFIIB family. Zn(2+) is required as a cofactor.

This Saccharolobus shibatae (strain ATCC 51178 / DSM 5389 / JCM 8931 / NBRC 15437 / B12) (Sulfolobus shibatae) protein is TFIIB-type zinc finger protein.